Here is a 199-residue protein sequence, read N- to C-terminus: Probable thymidylate kinase (199 aa).

9-16 (GIDGCGKT) contacts ATP.

Belongs to the thymidylate kinase family.

It carries out the reaction dTMP + ATP = dTDP + ADP. The polypeptide is Probable thymidylate kinase (Methanococcus maripaludis (strain DSM 14266 / JCM 13030 / NBRC 101832 / S2 / LL)).